A 202-amino-acid polypeptide reads, in one-letter code: PITH domain-containing protein 1 (202 aa).

The PITH domain occupies S11 to P184.

It belongs to the PITHD1 family.

This is PITH domain-containing protein 1 from Dictyostelium discoideum (Social amoeba).